The chain runs to 185 residues: MFRALPAAQRRAARAHLRAGGVLAYATESCFGLGCLPGNARGLRTILRLKGRPNHKGMIVVGRRFADLRRLVRPVDAAGQARLMSRWPGPTTFLLPADRRVLPLLRGRHRTLAVRVSAHHGVAMLTRDLGPLVSTSANFAGKVSLKNAAACRRTFGQEVMVLPGRTGRARRPSAIIDFASGRVLR.

The region spanning 7-185 is the YrdC-like domain; that stretch reads AAQRRAARAH…IDFASGRVLR (179 aa).

Belongs to the SUA5 family. TsaC subfamily.

The protein resides in the cytoplasm. The catalysed reaction is L-threonine + hydrogencarbonate + ATP = L-threonylcarbamoyladenylate + diphosphate + H2O. Functionally, required for the formation of a threonylcarbamoyl group on adenosine at position 37 (t(6)A37) in tRNAs that read codons beginning with adenine. Catalyzes the conversion of L-threonine, HCO(3)(-)/CO(2) and ATP to give threonylcarbamoyl-AMP (TC-AMP) as the acyladenylate intermediate, with the release of diphosphate. This is Threonylcarbamoyl-AMP synthase from Laribacter hongkongensis (strain HLHK9).